We begin with the raw amino-acid sequence, 288 residues long: Transposase for insertion sequence element IS1106 (288 aa).

It belongs to the transposase 11 family.

In terms of biological role, involved in the transposition of the insertion sequence. The chain is Transposase for insertion sequence element IS1106 from Neisseria meningitidis serogroup B.